We begin with the raw amino-acid sequence, 471 residues long: Mannose-1-phosphate guanylyltransferase (471 aa).

It belongs to the mannose-6-phosphate isomerase type 2 family.

It catalyses the reaction alpha-D-mannose 1-phosphate + GTP + H(+) = GDP-alpha-D-mannose + diphosphate. It functions in the pathway nucleotide-sugar biosynthesis; GDP-alpha-D-mannose biosynthesis; GDP-alpha-D-mannose from alpha-D-mannose 1-phosphate (GTP route): step 1/1. Its function is as follows. Involved in GDP-mannose biosynthesis which serves as the activated sugar nucleotide precursor for mannose residues in cell surface polysaccharides. This enzyme participates in synthesis of the LPS O antigen. This is Mannose-1-phosphate guanylyltransferase (manC) from Salmonella montevideo.